The chain runs to 360 residues: Phospho-N-acetylmuramoyl-pentapeptide-transferase (360 aa).

Transmembrane regions (helical) follow at residues 26–46, 74–94, 97–117, 134–154, 168–188, 199–219, 236–256, 263–283, 288–308, and 338–358; these read AILGLLTALVFSLWFGPKLIE, MGGLLILAAIFISVLLWGDLG, YVWVMLFVLGSFGLIGFIDDY, YILQSLAALLIAFFLYATAAN, VMPQLGAVFIVLAYFTIVGAS, GLAIMPTVMVAAAFALIAYLS, SGELVIVCTAIVGAGLGFLWF, VFMGDVGSLSLGAALGTIAVL, ILLVIMGGVFVMETLSVILQV, and VIVRFWIISIFLVLLGLATLK.

This sequence belongs to the glycosyltransferase 4 family. MraY subfamily. It depends on Mg(2+) as a cofactor.

It localises to the cell inner membrane. The catalysed reaction is UDP-N-acetyl-alpha-D-muramoyl-L-alanyl-gamma-D-glutamyl-meso-2,6-diaminopimeloyl-D-alanyl-D-alanine + di-trans,octa-cis-undecaprenyl phosphate = di-trans,octa-cis-undecaprenyl diphospho-N-acetyl-alpha-D-muramoyl-L-alanyl-D-glutamyl-meso-2,6-diaminopimeloyl-D-alanyl-D-alanine + UMP. It functions in the pathway cell wall biogenesis; peptidoglycan biosynthesis. Catalyzes the initial step of the lipid cycle reactions in the biosynthesis of the cell wall peptidoglycan: transfers peptidoglycan precursor phospho-MurNAc-pentapeptide from UDP-MurNAc-pentapeptide onto the lipid carrier undecaprenyl phosphate, yielding undecaprenyl-pyrophosphoryl-MurNAc-pentapeptide, known as lipid I. The protein is Phospho-N-acetylmuramoyl-pentapeptide-transferase of Shewanella baltica (strain OS185).